The sequence spans 344 residues: Arylacetonitrilase (344 aa).

Residues 5 to 290 enclose the CN hydrolase domain; the sequence is LRVAVTQAEP…EGIVYADLDL (286 aa). Catalysis depends on Glu-45, which acts as the Proton acceptor. Lys-126 is a catalytic residue. The active-site Nucleophile is the Cys-167. Positions 324–344 are disordered; the sequence is VIPRDEEEPSRKANVVVPKQE.

This sequence belongs to the carbon-nitrogen hydrolase superfamily. Nitrilase family.

It carries out the reaction a nitrile + 2 H2O = a carboxylate + NH4(+). The enzyme catalyses 4-chlorophenylacetonitrile + 2 H2O = 4-chlorophenylacetate + NH4(+). Nitrilase that hydrolyzes preferentially phenylacetonitrile and (R,S)-mandelonitrile. Also acts on dinitriles like phenylenediacetonitriles (PDAs) 1,2-PDA, 1,3-PDA, and 1,4-PDA, and cyanophenyl acetonitriles (CPAs) 2-CPA and 4-CPA. This is Arylacetonitrilase from Macrophomina phaseolina (strain MS6) (Charcoal rot fungus).